A 318-amino-acid polypeptide reads, in one-letter code: Inner membrane protein YbhN (318 aa).

Residues 1–13 (MSKSHPRWRLAKK) are Periplasmic-facing. Residues 14–34 (ILTWLFFIAVIVLLVVYAKKV) form a helical membrane-spanning segment. Topologically, residues 35-50 (DWEEVWKVIRDYNRVA) are cytoplasmic. A helical transmembrane segment spans residues 51–71 (LLSAVGLVVVSYLIYGCYDLL). Residues 72-85 (ARFYCGHKLAKRQV) are Periplasmic-facing. The helical transmembrane segment at 86–106 (MLVSFICYAFNLTLSTWVGGI) threads the bilayer. The Cytoplasmic segment spans residues 107–125 (GMRYRLYSRLGLPGSTITR). A helical transmembrane segment spans residues 126-146 (IFSLSITTNWLGYILLAGIIF). Topologically, residues 147 to 165 (TAGVVELPDHWYVDQTTLR) are periplasmic. Residues 166–186 (ILGIGLLMIIAVYLWFCAFAK) traverse the membrane as a helical segment. Residues 187-205 (HRHMTIKGQKLVLPSWKFA) are Cytoplasmic-facing. Residues 206 to 226 (LAQMLISSVNWMVMGAIIWLL) form a helical membrane-spanning segment. Topologically, residues 227–233 (LGQSVNY) are periplasmic. 2 helical membrane passes run 234-254 (FFVL…HIPA) and 255-275 (GIGV…TSKG). Topologically, residues 276-277 (TI) are periplasmic. Residues 278-298 (IAALLAYRVLYYFIPLLLALI) traverse the membrane as a helical segment. Topologically, residues 299–318 (CYLLLESQAKKLRAKNEAAM) are cytoplasmic.

This sequence to Synechocystis PCC 6803 slr0712.

It localises to the cell inner membrane. This chain is Inner membrane protein YbhN (ybhN), found in Escherichia coli (strain K12).